Here is a 247-residue protein sequence, read N- to C-terminus: tRNA (guanine-N(1)-)-methyltransferase (247 aa).

S-adenosyl-L-methionine-binding positions include glycine 113 and isoleucine 133–methionine 138.

This sequence belongs to the RNA methyltransferase TrmD family. In terms of assembly, homodimer.

It is found in the cytoplasm. It carries out the reaction guanosine(37) in tRNA + S-adenosyl-L-methionine = N(1)-methylguanosine(37) in tRNA + S-adenosyl-L-homocysteine + H(+). Functionally, specifically methylates guanosine-37 in various tRNAs. The protein is tRNA (guanine-N(1)-)-methyltransferase of Vibrio campbellii (strain ATCC BAA-1116).